Consider the following 198-residue polypeptide: Large ribosomal subunit protein uL24c (198 aa).

The N-terminal 50 residues, 1-50 (MATMSALQSSFTSLSLSPSSSFLGQRLISPISLSVTSPVKPAENPCLVLA), are a transit peptide targeting the chloroplast.

Belongs to the universal ribosomal protein uL24 family. Part of the 50S ribosomal subunit.

It localises to the plastid. The protein localises to the chloroplast. Functionally, one of two assembly initiator proteins, it binds directly to the 5'-end of the 23S rRNA, where it nucleates assembly of the 50S subunit. Required for optimal plastid performance in terms of photosynthesis and growth. Required for the translation of plastid mRNAs. Plays a critical role in biosynthesis of thylakoid membrane proteins encoded by chloroplast genes. The sequence is that of Large ribosomal subunit protein uL24c (RPL24) from Arabidopsis thaliana (Mouse-ear cress).